Here is a 378-residue protein sequence, read N- to C-terminus: N-acetyllactosaminide beta-1,3-N-acetylglucosaminyltransferase 4 (378 aa).

Topologically, residues 1 to 28 are cytoplasmic; the sequence is MLPPQPSAAHQGRGGRSGLLPKGPAMLC. A helical; Signal-anchor for type II membrane protein transmembrane segment spans residues 29 to 49; that stretch reads RLCWLVSYSLAVLLLGCLLFL. Residues 50–378 lie on the Lumenal side of the membrane; that stretch reads RKAAKPAGDP…KCAAGPIPQR (329 aa). Residues 59-81 are disordered; sequence PTAHQPFWAPPTPRHSRCPPNHT. Asn192 is a glycosylation site (N-linked (GlcNAc...) asparagine).

It belongs to the glycosyltransferase 31 family. In terms of tissue distribution, mainly expressed in brain tissues such as whole brain, hippocampus, amygdala, cerebellum and caudate nucleus. Also expressed in colon, esophagus and kidney.

The protein resides in the golgi apparatus membrane. The catalysed reaction is a beta-D-galactosyl-(1-&gt;4)-N-acetyl-beta-D-glucosaminyl derivative + UDP-N-acetyl-alpha-D-glucosamine = an N-acetyl-beta-D-glucosaminyl-(1-&gt;3)-beta-D-galactosyl-(1-&gt;4)-N-acetyl-beta-D-glucosaminyl derivative + UDP + H(+). The protein operates within protein modification; protein glycosylation. Beta-1,3-N-acetylglucosaminyltransferase involved in the synthesis of poly-N-acetyllactosamine. Has activity for type 2 oligosaccharides. The sequence is that of N-acetyllactosaminide beta-1,3-N-acetylglucosaminyltransferase 4 (B3GNT4) from Homo sapiens (Human).